The primary structure comprises 428 residues: D-amino acid dehydrogenase (428 aa).

3–17 is a binding site for FAD; that stretch reads VVILGSGVVGVASAY.

The protein belongs to the DadA oxidoreductase family. Requires FAD as cofactor.

It catalyses the reaction a D-alpha-amino acid + A + H2O = a 2-oxocarboxylate + AH2 + NH4(+). It participates in amino-acid degradation; D-alanine degradation; NH(3) and pyruvate from D-alanine: step 1/1. Its function is as follows. Oxidative deamination of D-amino acids. This is D-amino acid dehydrogenase from Burkholderia cenocepacia (strain HI2424).